A 432-amino-acid chain; its full sequence is Ornithine decarboxylase (432 aa).

Residue lysine 98 is modified to N6-(pyridoxal phosphate)lysine. Pyridoxal 5'-phosphate contacts are provided by residues serine 229, glycine 266, and 296-299 (EPGR). 341 to 342 (FD) serves as a coordination point for substrate. The active-site Proton donor; shared with dimeric partner is cysteine 377. Substrate is bound at residue aspartate 378. Residue tyrosine 407 coordinates pyridoxal 5'-phosphate.

This sequence belongs to the Orn/Lys/Arg decarboxylase class-II family. As to quaternary structure, homodimer. Only the dimer is catalytically active, as the active sites are constructed of residues from both monomers. It depends on pyridoxal 5'-phosphate as a cofactor.

The protein localises to the cytoplasm. The enzyme catalyses L-ornithine + H(+) = putrescine + CO2. It functions in the pathway amine and polyamine biosynthesis; putrescine biosynthesis via L-ornithine pathway; putrescine from L-ornithine: step 1/1. Its activity is regulated as follows. Inhibited by antizyme (AZ) OAZ1 in response to polyamine levels. AZ inhibits the assembly of the functional homodimer by binding to ODC monomers and targeting them for ubiquitin-independent proteolytic destruction by the 26S proteasome. Functionally, catalyzes the first and rate-limiting step of polyamine biosynthesis that converts ornithine into putrescine, which is the precursor for the polyamines, spermidine and spermine. Polyamines are essential for cell proliferation and are implicated in cellular processes, ranging from DNA replication to apoptosis. The polypeptide is Ornithine decarboxylase (spe1) (Schizosaccharomyces pombe (strain 972 / ATCC 24843) (Fission yeast)).